The following is a 168-amino-acid chain: S-ribosylhomocysteine lyase (168 aa).

Fe cation is bound by residues H54, H58, and C128.

It belongs to the LuxS family. Homodimer. Fe cation serves as cofactor.

The catalysed reaction is S-(5-deoxy-D-ribos-5-yl)-L-homocysteine = (S)-4,5-dihydroxypentane-2,3-dione + L-homocysteine. Its function is as follows. Involved in the synthesis of autoinducer 2 (AI-2) which is secreted by bacteria and is used to communicate both the cell density and the metabolic potential of the environment. The regulation of gene expression in response to changes in cell density is called quorum sensing. Catalyzes the transformation of S-ribosylhomocysteine (RHC) to homocysteine (HC) and 4,5-dihydroxy-2,3-pentadione (DPD). The polypeptide is S-ribosylhomocysteine lyase (Neisseria gonorrhoeae (strain ATCC 700825 / FA 1090)).